The sequence spans 1236 residues: DNA-directed RNA polymerase subunit beta (1236 aa).

The disordered stretch occupies residues 1185 to 1236; the sequence is IEGSEDYTEPKQPNDNYLEEEENKDKESDYDEDLNFDDLTKGLQLDDFNDEH. Residues 1201 to 1220 show a composition bias toward acidic residues; that stretch reads YLEEEENKDKESDYDEDLNF.

It belongs to the RNA polymerase beta chain family. In terms of assembly, the RNAP catalytic core consists of 2 alpha, 1 beta, 1 beta' and 1 omega subunit. When a sigma factor is associated with the core the holoenzyme is formed, which can initiate transcription.

The catalysed reaction is RNA(n) + a ribonucleoside 5'-triphosphate = RNA(n+1) + diphosphate. Its function is as follows. DNA-dependent RNA polymerase catalyzes the transcription of DNA into RNA using the four ribonucleoside triphosphates as substrates. The sequence is that of DNA-directed RNA polymerase subunit beta from Clostridium tetani (strain Massachusetts / E88).